The chain runs to 312 residues: Very-long-chain 3-oxoacyl-CoA reductase (312 aa).

The chain crosses the membrane as a helical span at residues 4–24 (ALPAAGFLYWVGAGTVAYLAL). 50–79 (GEWAVVTGSTDGIGKSYAEELAKHGMKVVL) lines the NADP(+) pocket. A run of 2 helical transmembrane segments spans residues 182 to 202 (GAILNISSGSGMLPVPLLTIY) and 271 to 291 (GYLIHALMGSIISNLPSWIYL). Position 189 (S189) interacts with substrate. The active-site Proton acceptor is Y202. A Di-lysine motif motif is present at residues 308–312 (KTKKN).

The protein belongs to the short-chain dehydrogenases/reductases (SDR) family. 17-beta-HSD 3 subfamily. As to quaternary structure, interacts with ELOVL1 and LASS2. Expressed in most tissues tested. Highly expressed in the ovary and mammary. Expressed in platelets.

It localises to the endoplasmic reticulum membrane. The catalysed reaction is a very-long-chain (3R)-3-hydroxyacyl-CoA + NADP(+) = a very-long-chain 3-oxoacyl-CoA + NADPH + H(+). It catalyses the reaction 17beta-estradiol + NAD(+) = estrone + NADH + H(+). It carries out the reaction 17beta-estradiol + NADP(+) = estrone + NADPH + H(+). The enzyme catalyses 3-oxooctadecanoyl-CoA + NADPH + H(+) = (3R)-hydroxyoctadecanoyl-CoA + NADP(+). The catalysed reaction is (7Z,10Z,13Z,16Z)-3-oxodocosatetraenoyl-CoA + NADPH + H(+) = (3R)-hydroxy-(7Z,10Z,13Z,16Z)-docosatetraenoyl-CoA + NADP(+). It catalyses the reaction 3-oxo-(7Z,10Z,13Z,16Z,19Z)-docosapentaenoyl-CoA + NADPH + H(+) = (3R)-hydroxy-(7Z,10Z,13Z,16Z,19Z)-docosapentaenoyl-CoA + NADP(+). It carries out the reaction (8Z,11Z,14Z)-3-oxoeicosatrienoyl-CoA + NADPH + H(+) = (3R)-hydroxy-(8Z,11Z,14Z)-eicosatrienoyl-CoA + NADP(+). It functions in the pathway lipid metabolism; fatty acid biosynthesis. It participates in steroid biosynthesis; estrogen biosynthesis. Functionally, catalyzes the second of the four reactions of the long-chain fatty acids elongation cycle. This endoplasmic reticulum-bound enzymatic process, allows the addition of two carbons to the chain of long- and very long-chain fatty acids/VLCFAs per cycle. This enzyme has a 3-ketoacyl-CoA reductase activity, reducing 3-ketoacyl-CoA to 3-hydroxyacyl-CoA, within each cycle of fatty acid elongation. Thereby, it may participate in the production of VLCFAs of different chain lengths that are involved in multiple biological processes as precursors of membrane lipids and lipid mediators. May also catalyze the transformation of estrone (E1) into estradiol (E2) and play a role in estrogen formation. This Homo sapiens (Human) protein is Very-long-chain 3-oxoacyl-CoA reductase.